The chain runs to 197 residues: Elongation factor Ts (197 aa).

An involved in Mg(2+) ion dislocation from EF-Tu region spans residues 81 to 84; it reads TDFV.

Belongs to the EF-Ts family.

It localises to the cytoplasm. In terms of biological role, associates with the EF-Tu.GDP complex and induces the exchange of GDP to GTP. It remains bound to the aminoacyl-tRNA.EF-Tu.GTP complex up to the GTP hydrolysis stage on the ribosome. The protein is Elongation factor Ts of Persephonella marina (strain DSM 14350 / EX-H1).